The following is a 139-amino-acid chain: Transcriptional regulator WhiB5 (139 aa).

The 4Fe-4S Wbl-type domain occupies 4–77; it reads PCATDPELWF…AGIKLPGGQY (74 aa). 4 residues coordinate [4Fe-4S] cluster: cysteine 5, cysteine 41, cysteine 45, and cysteine 53.

Belongs to the WhiB family. Requires [4Fe-4S] cluster as cofactor. In terms of processing, the Fe-S cluster can be nitrosylated by nitric oxide (NO). Upon Fe-S cluster removal intramolecular disulfide bonds are formed.

It is found in the cytoplasm. A transcription factor that is probably redox-responsive. Probably plays a role in immunomodulation and reactivation after chronic infection. Its induction results in transcription of a number of genes including sigM, and the genes for 2 type VII secretion systems ESX-2 and ESX-4. Seems to negatively regulate its own expression. The apo-form has been shown to act as a protein disulfide reductase. The apo- but not holo-form probably binds DNA. This Mycobacterium tuberculosis (strain ATCC 25618 / H37Rv) protein is Transcriptional regulator WhiB5 (whiB5).